The sequence spans 64 residues: Lingual antimicrobial peptide (64 aa).

The signal sequence occupies residues 1–24 (MRLHHLLLALLFLVLSAGSGFTQG). 3 disulfides stabilise this stretch: Cys31-Cys60, Cys38-Cys53, and Cys43-Cys61.

Belongs to the beta-defensin family. LAP/TAP subfamily. As to expression, in many of the exposed epithelial surfaces including conjunctivae, bronchi, colon, urinary tract and trachea.

The protein resides in the secreted. Shows a broad spectrum of antibacterial and antifungal activities. In Bos taurus (Bovine), this protein is Lingual antimicrobial peptide (LAP).